Consider the following 298-residue polypeptide: Mitochondrial 2-oxodicarboxylate carrier (298 aa).

Solcar repeat units lie at residues 10 to 99 (HETC…YKKF), 106 to 195 (SPGL…VKDN), and 204 to 293 (LEFL…TYAW). 6 consecutive transmembrane segments (helical) span residues 16-36 (VAAG…LDVV), 69-88 (FGFY…KRAV), 112-132 (PIAG…FEVV), 166-186 (GLNK…MTYF), 204-224 (LEFL…SVFN), and 276-296 (LGPG…WLQE).

Belongs to the mitochondrial carrier (TC 2.A.29) family. Widely expressed.

The protein resides in the mitochondrion inner membrane. The enzyme catalyses 2-oxoadipate(in) + 2-oxoglutarate(out) = 2-oxoadipate(out) + 2-oxoglutarate(in). The catalysed reaction is hexanedioate(in) + 2-oxoglutarate(out) = hexanedioate(out) + 2-oxoglutarate(in). It catalyses the reaction L-2-aminoadipate(in) + 2-oxoglutarate(out) = L-2-aminoadipate(out) + 2-oxoglutarate(in). It carries out the reaction glutarate(in) + 2-oxoglutarate(out) = glutarate(out) + 2-oxoglutarate(in). The enzyme catalyses 2-oxoheptanedioate(in) + 2-oxoglutarate(out) = 2-oxoheptanedioate(out) + 2-oxoglutarate(in). The catalysed reaction is heptanedioate(in) + 2-oxoglutarate(out) = heptanedioate(out) + 2-oxoglutarate(in). It catalyses the reaction citrate(in) + 2-oxoglutarate(out) = citrate(out) + 2-oxoglutarate(in). Its function is as follows. Transports dicarboxylates across the inner membranes of mitochondria by a counter-exchange mechanism. Can transport 2-oxoadipate (2-oxohexanedioate), 2-oxoglutarate, adipate (hexanedioate), glutarate, and to a lesser extent, pimelate (heptanedioate), 2-oxopimelate (2-oxoheptanedioate), 2-aminoadipate (2-aminohexanedioate), oxaloacetate, and citrate. Plays a central role in catabolism of lysine, hydroxylysine, and tryptophan, by transporting common metabolite intermediates (such as 2-oxoadipate) into the mitochondria, where it is converted into acetyl-CoA and can enter the citric acid (TCA) cycle. In Rattus norvegicus (Rat), this protein is Mitochondrial 2-oxodicarboxylate carrier (Slc25a21).